The chain runs to 205 residues: Holliday junction branch migration complex subunit RuvA (205 aa).

The segment at 1–64 is domain I; the sequence is MIGKLKGVID…EDQIKLFGFR (64 aa). The interval 65-143 is domain II; that stretch reads TDHEREWFRL…SFANVDPTVV (79 aa). Residues 144 to 154 are flexible linker; that stretch reads HLAGDLDDQRA. The domain III stretch occupies residues 154-205; the sequence is APRPVRDAISALVNLGYGQPQATAAIAAASRGAGENAETAQLIRLGLKELSK.

Belongs to the RuvA family. As to quaternary structure, homotetramer. Forms an RuvA(8)-RuvB(12)-Holliday junction (HJ) complex. HJ DNA is sandwiched between 2 RuvA tetramers; dsDNA enters through RuvA and exits via RuvB. An RuvB hexamer assembles on each DNA strand where it exits the tetramer. Each RuvB hexamer is contacted by two RuvA subunits (via domain III) on 2 adjacent RuvB subunits; this complex drives branch migration. In the full resolvosome a probable DNA-RuvA(4)-RuvB(12)-RuvC(2) complex forms which resolves the HJ.

Its subcellular location is the cytoplasm. Its function is as follows. The RuvA-RuvB-RuvC complex processes Holliday junction (HJ) DNA during genetic recombination and DNA repair, while the RuvA-RuvB complex plays an important role in the rescue of blocked DNA replication forks via replication fork reversal (RFR). RuvA specifically binds to HJ cruciform DNA, conferring on it an open structure. The RuvB hexamer acts as an ATP-dependent pump, pulling dsDNA into and through the RuvAB complex. HJ branch migration allows RuvC to scan DNA until it finds its consensus sequence, where it cleaves and resolves the cruciform DNA. The protein is Holliday junction branch migration complex subunit RuvA of Nitrobacter winogradskyi (strain ATCC 25391 / DSM 10237 / CIP 104748 / NCIMB 11846 / Nb-255).